Reading from the N-terminus, the 368-residue chain is 3-dehydroquinate synthase (368 aa).

NAD(+) is bound by residues 76 to 81 (DGEQYK), 110 to 114 (GVIGD), 134 to 135 (TT), Lys-147, Lys-156, and 174 to 177 (CLKT). Zn(2+) contacts are provided by Glu-189, His-252, and His-269.

The protein belongs to the sugar phosphate cyclases superfamily. Dehydroquinate synthase family. Requires NAD(+) as cofactor. It depends on Co(2+) as a cofactor. Zn(2+) serves as cofactor.

It localises to the cytoplasm. It carries out the reaction 7-phospho-2-dehydro-3-deoxy-D-arabino-heptonate = 3-dehydroquinate + phosphate. It functions in the pathway metabolic intermediate biosynthesis; chorismate biosynthesis; chorismate from D-erythrose 4-phosphate and phosphoenolpyruvate: step 2/7. Its function is as follows. Catalyzes the conversion of 3-deoxy-D-arabino-heptulosonate 7-phosphate (DAHP) to dehydroquinate (DHQ). In Vibrio vulnificus (strain YJ016), this protein is 3-dehydroquinate synthase.